A 447-amino-acid chain; its full sequence is Trigger factor (447 aa).

In terms of domain architecture, PPIase FKBP-type spans 188–273 (GDKLVIDFEG…VNDIQVAEDF (86 aa)).

This sequence belongs to the FKBP-type PPIase family. Tig subfamily.

It is found in the cytoplasm. The enzyme catalyses [protein]-peptidylproline (omega=180) = [protein]-peptidylproline (omega=0). Functionally, involved in protein export. Acts as a chaperone by maintaining the newly synthesized protein in an open conformation. Functions as a peptidyl-prolyl cis-trans isomerase. The polypeptide is Trigger factor (Wolbachia sp. subsp. Brugia malayi (strain TRS)).